A 223-amino-acid polypeptide reads, in one-letter code: 7-cyano-7-deazaguanine synthase (223 aa).

Phe10–Leu20 lines the ATP pocket. Zn(2+)-binding residues include Cys188, Cys197, Cys200, and Cys203.

It belongs to the QueC family. The cofactor is Zn(2+).

The catalysed reaction is 7-carboxy-7-deazaguanine + NH4(+) + ATP = 7-cyano-7-deazaguanine + ADP + phosphate + H2O + H(+). Its pathway is purine metabolism; 7-cyano-7-deazaguanine biosynthesis. In terms of biological role, catalyzes the ATP-dependent conversion of 7-carboxy-7-deazaguanine (CDG) to 7-cyano-7-deazaguanine (preQ(0)). This is 7-cyano-7-deazaguanine synthase from Phocaeicola vulgatus (strain ATCC 8482 / DSM 1447 / JCM 5826 / CCUG 4940 / NBRC 14291 / NCTC 11154) (Bacteroides vulgatus).